Consider the following 628-residue polypeptide: ATP-dependent zinc metalloprotease FtsH 4 (628 aa).

Topologically, residues 1-14 (MAIKPQPQWQRRLA) are cytoplasmic. The helical transmembrane segment at 15–35 (SVLLWGSTIYLLVNLLAPALF) threads the bilayer. At 36–119 (RSQPPQVPYS…AAAPPAKNSW (84 aa)) the chain is on the lumenal side. Residues 120–140 (FGTLLSWVIPPLIFVGIWSFF) form a helical membrane-spanning segment. At 141–628 (LNRNNNGAPG…QVQAPGTLVV (488 aa)) the chain is on the cytoplasmic side. ATP is bound at residue 214–221 (GPPGTGKT). His-438 is a Zn(2+) binding site. Residue Glu-439 is part of the active site. Residues His-442 and Asp-515 each contribute to the Zn(2+) site.

This sequence in the central section; belongs to the AAA ATPase family. In the C-terminal section; belongs to the peptidase M41 family. As to quaternary structure, homohexamer. Zn(2+) is required as a cofactor.

Its subcellular location is the cellular thylakoid membrane. In terms of biological role, acts as a processive, ATP-dependent zinc metallopeptidase for both cytoplasmic and membrane proteins. Plays a role in the quality control of integral membrane proteins. This Synechocystis sp. (strain ATCC 27184 / PCC 6803 / Kazusa) protein is ATP-dependent zinc metalloprotease FtsH 4.